A 3174-amino-acid polypeptide reads, in one-letter code: Intermembrane lipid transfer protein VPS13A (3174 aa).

In terms of domain architecture, Chorein N-terminal spans 3–116; the sequence is FESVVVDVLN…LMEAKQQELK (114 aa). 3 TPR repeats span residues 212–245, 373–406, and 537–575; these read LFAY…ENIV, LTSK…QTAE, and IDSF…NPLD. Phosphoserine is present on serine 839. Residues 842–848 carry the FFAT motif; sequence EFFDAPC. TPR repeat units follow at residues 1256–1289 and 1291–1320; these read VIDL…LLPL and LEVV…KPME. Phosphoserine is present on serine 1416. Residues 2009-2041 form a TPR 6 repeat; the sequence is YEGDTLLGTASPENEFNIPLGSYRSFIFLKPED. Residues 2209 to 2454 form the SHR-BD domain; it reads VAFHSPYWMV…VFYTWADPVG (246 aa). TPR repeat units follow at residues 2568 to 2601, 2717 to 2751, and 2860 to 2898; these read PMSV…DTNV, LGFI…FKEE, and ILGL…PEEF. Residues 2751 to 3174 are required for mitochondrial localization; it reads EYKTASLVDQ…QEAREPSPSL (424 aa). Residues 2953–3027 are required for lipid droplet localization; that stretch reads PAGFREGITR…SSTFQGIKRA (75 aa). Residues 3086 to 3119 form a TPR 10 repeat; that stretch reads MLMITRRGVLFVTKGTFGQLTCEWQYSFDEFTKE.

The protein belongs to the VPS13 family. As to quaternary structure, interacts (via FFAT motif) with VAPA and VAPB. Interacts with RAB7A. Interacts with XK. As to expression, expressed in red blood cells (at protein level). Widely expressed, with high expression in brain, heart, skeletal muscle and kidney.

The protein localises to the mitochondrion outer membrane. It localises to the endoplasmic reticulum membrane. The protein resides in the endosome membrane. Its subcellular location is the lysosome membrane. It is found in the lipid droplet. The protein localises to the golgi apparatus. It localises to the cytoplasmic vesicle. The protein resides in the secretory vesicle. Its subcellular location is the neuronal dense core vesicle. Mediates the transfer of lipids between membranes at organelle contact sites. Binds phospholipids. Required for the formation or stabilization of ER-mitochondria contact sites which enable transfer of lipids between the ER and mitochondria. Negatively regulates lipid droplet size and motility. Required for efficient lysosomal protein degradation. The sequence is that of Intermembrane lipid transfer protein VPS13A (VPS13A) from Homo sapiens (Human).